The chain runs to 99 residues: Putative regulatory protein Kole_1849 (99 aa).

This sequence belongs to the RemA family.

The protein is Putative regulatory protein Kole_1849 of Kosmotoga olearia (strain ATCC BAA-1733 / DSM 21960 / TBF 19.5.1).